The following is a 365-amino-acid chain: Peptide chain release factor 2 (365 aa).

At glutamine 252 the chain carries N5-methylglutamine.

The protein belongs to the prokaryotic/mitochondrial release factor family. Post-translationally, methylated by PrmC. Methylation increases the termination efficiency of RF2.

It is found in the cytoplasm. In terms of biological role, peptide chain release factor 2 directs the termination of translation in response to the peptide chain termination codons UGA and UAA. The protein is Peptide chain release factor 2 of Shewanella baltica (strain OS223).